A 581-amino-acid chain; its full sequence is MNIENYLSETLAKVFQKLGYAESFAKVVTSTREDVRHFQCNGAMPLAKFAKKPPLAIAEEIVEHIDAEDIFAKLEVAKPGFINITLAPKFLADTTNRFLNSNKFGVQNNLPNRKVVLDFGGPNVAKPMHVGHIRSALLGDALQRIHRFCGDTVVSDVHLGDWGTQMGMLIEEIKLQSPQLVYFDENYTGEYPTESPVTVQELAEIYPRASKRCKSDINEMEKARLATFELQQGRRGYVALWQHFVRISIDAVKKDFDSLDVHFDLWLGESDANKFIDEMISYFQANNFIYEDEGAWVIDTNKDGVPPLIVIKKDGGVMYGTTDLATLWQRSKDLDPDEIIYVVDKRQSLHFKQVFSVAERTKVVSEKCKLKHVAFGTVNGKDGRPFKTREGGVMHLADLISQAKEYAKNRMPDENDDSIINQIAMATIKFGDLINNYANDYFFDLEKFAQHEGKTGPYLLYTVVRAKSILRKIFGDNYDIKSLAKDYKVVNAHNEYEEKLQLQLIQFPIAVQRAYENSQPHHICEYAYSLANSFNKFYVNCPINNLDDESLKKARIALCMATVKAMTIASDLIGISIPERM.

Residues 122–132 carry the 'HIGH' region motif; it reads PNVAKPMHVGH.

Belongs to the class-I aminoacyl-tRNA synthetase family. In terms of assembly, monomer.

The protein resides in the cytoplasm. The enzyme catalyses tRNA(Arg) + L-arginine + ATP = L-arginyl-tRNA(Arg) + AMP + diphosphate. In Francisella tularensis subsp. tularensis (strain FSC 198), this protein is Arginine--tRNA ligase.